The chain runs to 275 residues: MSARGGSLHGRVAFVTGAARAQGRSHAVRLAREGADIVALDICAPVSGSVTYPPATSEDLGETVRAVEAEGRKVLAREVDIRDDAELRRLVADGVEQFGRLDIVVANAGVLGWGRLWELTDEQWETVIGVNLTGTWRTLRATVPAMIDAGNGGSIVVVSSSAGLKATPGNGHYAASKHALVALTNTLAIELGEFGIRVNSIHPYSVDTPMIEPEAMIQTFAKHPGYVHSFPPMPLQPKGFMTPDEISDVVVWLAGDGSGALSGNQIPVDKGALKY.

Residues 20–22, 41–42, 80–81, and Asn107 contribute to the NAD(+) site; these read RAQ and DI. Substrate is bound at residue Ser160. Catalysis depends on Tyr173, which acts as the Proton acceptor. Residues Lys177 and 206–208 contribute to the NAD(+) site; that span reads VDT.

Belongs to the short-chain dehydrogenases/reductases (SDR) family.

This is an uncharacterized protein from Mycobacterium tuberculosis (strain CDC 1551 / Oshkosh).